Reading from the N-terminus, the 215-residue chain is Urease accessory protein UreG (215 aa).

11 to 18 (GPVGAGKS) serves as a coordination point for GTP.

This sequence belongs to the SIMIBI class G3E GTPase family. UreG subfamily. As to quaternary structure, homodimer. UreD, UreF and UreG form a complex that acts as a GTP-hydrolysis-dependent molecular chaperone, activating the urease apoprotein by helping to assemble the nickel containing metallocenter of UreC. The UreE protein probably delivers the nickel.

The protein localises to the cytoplasm. In terms of biological role, facilitates the functional incorporation of the urease nickel metallocenter. This process requires GTP hydrolysis, probably effectuated by UreG. This chain is Urease accessory protein UreG, found in Cenarchaeum symbiosum (strain A).